The following is a 206-amino-acid chain: UPF0328 protein ECU01_0050/ECU01_1560 (206 aa).

Disordered stretches follow at residues 1–153 (MPRP…HSHT) and 179–206 (GRLH…LATL). Over residues 74–96 (HTEGCHTHEANPEPNTKHTETES) the composition is skewed to basic and acidic residues. 2 stretches are compositionally biased toward polar residues: residues 97-120 (PKPQ…SQNT) and 132-148 (SRPS…QSPH).

The protein belongs to the UPF0328 family.

The chain is UPF0328 protein ECU01_0050/ECU01_1560 from Encephalitozoon cuniculi (strain GB-M1) (Microsporidian parasite).